The primary structure comprises 509 residues: Glycogen synthase 2 (509 aa).

An ADP-alpha-D-glucose-binding site is contributed by K15.

The protein belongs to the glycosyltransferase 1 family. Bacterial/plant glycogen synthase subfamily.

It catalyses the reaction [(1-&gt;4)-alpha-D-glucosyl](n) + ADP-alpha-D-glucose = [(1-&gt;4)-alpha-D-glucosyl](n+1) + ADP + H(+). Its pathway is glycan biosynthesis; glycogen biosynthesis. Synthesizes alpha-1,4-glucan chains using ADP-glucose. This Agrobacterium fabrum (strain C58 / ATCC 33970) (Agrobacterium tumefaciens (strain C58)) protein is Glycogen synthase 2 (glgA2).